Consider the following 62-residue polypeptide: Large ribosomal subunit protein bL28 (62 aa).

It belongs to the bacterial ribosomal protein bL28 family.

The chain is Large ribosomal subunit protein bL28 from Staphylococcus epidermidis (strain ATCC 12228 / FDA PCI 1200).